The chain runs to 128 residues: Aspartate 1-decarboxylase (128 aa).

Serine 25 acts as the Schiff-base intermediate with substrate; via pyruvic acid in catalysis. Position 25 is a pyruvic acid (Ser) (serine 25). Residue threonine 57 coordinates substrate. Tyrosine 58 acts as the Proton donor in catalysis. 73 to 75 (GSA) contacts substrate.

This sequence belongs to the PanD family. As to quaternary structure, heterooctamer of four alpha and four beta subunits. The cofactor is pyruvate. Post-translationally, is synthesized initially as an inactive proenzyme, which is activated by self-cleavage at a specific serine bond to produce a beta-subunit with a hydroxyl group at its C-terminus and an alpha-subunit with a pyruvoyl group at its N-terminus.

It is found in the cytoplasm. It carries out the reaction L-aspartate + H(+) = beta-alanine + CO2. It participates in cofactor biosynthesis; (R)-pantothenate biosynthesis; beta-alanine from L-aspartate: step 1/1. Catalyzes the pyruvoyl-dependent decarboxylation of aspartate to produce beta-alanine. The chain is Aspartate 1-decarboxylase from Paraburkholderia phymatum (strain DSM 17167 / CIP 108236 / LMG 21445 / STM815) (Burkholderia phymatum).